Reading from the N-terminus, the 149-residue chain is D-aminoacyl-tRNA deacylase (149 aa).

A Gly-cisPro motif, important for rejection of L-amino acids motif is present at residues 137-138 (GP).

The protein belongs to the DTD family. In terms of assembly, homodimer.

The protein localises to the cytoplasm. The catalysed reaction is glycyl-tRNA(Ala) + H2O = tRNA(Ala) + glycine + H(+). It catalyses the reaction a D-aminoacyl-tRNA + H2O = a tRNA + a D-alpha-amino acid + H(+). Its function is as follows. An aminoacyl-tRNA editing enzyme that deacylates mischarged D-aminoacyl-tRNAs. Also deacylates mischarged glycyl-tRNA(Ala), protecting cells against glycine mischarging by AlaRS. Acts via tRNA-based rather than protein-based catalysis; rejects L-amino acids rather than detecting D-amino acids in the active site. By recycling D-aminoacyl-tRNA to D-amino acids and free tRNA molecules, this enzyme counteracts the toxicity associated with the formation of D-aminoacyl-tRNA entities in vivo and helps enforce protein L-homochirality. This is D-aminoacyl-tRNA deacylase from Halothermothrix orenii (strain H 168 / OCM 544 / DSM 9562).